The sequence spans 284 residues: tRNA pseudouridine synthase B (284 aa).

The active-site Nucleophile is Asp-40.

Belongs to the pseudouridine synthase TruB family. Type 1 subfamily.

It catalyses the reaction uridine(55) in tRNA = pseudouridine(55) in tRNA. Functionally, responsible for synthesis of pseudouridine from uracil-55 in the psi GC loop of transfer RNAs. The protein is tRNA pseudouridine synthase B of Helicobacter hepaticus (strain ATCC 51449 / 3B1).